We begin with the raw amino-acid sequence, 412 residues long: Alpha-1-antitrypsin 1-3 (412 aa).

An N-terminal signal peptide occupies residues 1–24 (MTPSISWGLLLLAGLCCLVPSFLA). Residues Asn-64, Asn-101, and Asn-265 are each glycosylated (N-linked (GlcNAc...) asparagine). The tract at residues 368–387 (AVTVLLAVPYSMPPILRFDH) is RCL.

It belongs to the serpin family.

The protein localises to the secreted. Its function is as follows. Inhibitor of serine proteases. Can inhibit trypsin and chymotrypsin; relatively ineffective against elastase. This is Alpha-1-antitrypsin 1-3 (Serpina1c) from Mus musculus (Mouse).